Reading from the N-terminus, the 164-residue chain is SVILDTKGEPVSNAADAYYLVPVSHGEGGLALAKVGNEAEPKAVVLDPHHRPGLTVRFETPLAIAIITESFFLNIKFVPSSSDSEVWDVSKQYPIGLAVKVTDTKSFVGPFRVEKEGEGYKIVYYPDRGQTGLDIGLVHRNDKYYLAATEGEPFVFKIRKATYE.

Belongs to the protease inhibitor I3 (leguminous Kunitz-type inhibitor) family.

The protein resides in the secreted. Functionally, inhibits T.cruzi cruzipain. In Bauhinia bauhinioides (Perlebia bauhinoides), this protein is Kunitz-type proteinase inhibitor BbCI.